Reading from the N-terminus, the 192-residue chain is Erythropoietin (192 aa).

The first 26 residues, 1-26 (MGVPDCLALPLLVTFLLLSLGLPVLG), serve as a signal peptide directing secretion. The cysteines at positions 33 and 187 are disulfide-linked. N-linked (GlcNAc...) asparagine glycans are attached at residues Asn50, Asn64, and Asn109.

It belongs to the EPO/TPO family.

It localises to the secreted. Functionally, hormone involved in the regulation of erythrocyte proliferation and differentiation and the maintenance of a physiological level of circulating erythrocyte mass. Binds to EPOR leading to EPOR dimerization and JAK2 activation thereby activating specific downstream effectors, including STAT1 and STAT3. The protein is Erythropoietin (EPO) of Spalax golani (Golan Heights blind mole rat).